A 3726-amino-acid chain; its full sequence is Histone-lysine N-methyltransferase trithorax (3726 aa).

Disordered regions lie at residues 1-247 (MGRS…ATTS), 321-352 (QLNS…GVGG), 371-429 (NEVA…TAKQ), and 509-624 (AGAS…RSTR). Composition is skewed to low complexity over residues 31-53 (PAEP…GSSA) and 71-101 (GGAS…STGS). Positions 102-115 (GSSGSGSTNGGSVN) are enriched in gly residues. Basic and acidic residues predominate over residues 126–143 (LDKEAVTKDQNGDGDKTR). Low complexity predominate over residues 147-205 (SSAPSGKLSAAASGKALSKSSRTFSASTSVTSSGRSSGSSPDGNSGASSDGASSGISCG). Residues 206 to 215 (KSTAKSTEAS) show a composition bias toward polar residues. Low complexity predominate over residues 222–247 (TTGAGTCSSAKSSKASSGTTSEATTS). Composition is skewed to low complexity over residues 384-402 (AAAN…GPPA) and 509-525 (AGAS…SSSN). The span at 553-586 (PEDQNNAEDDEMDDDDDDEEAEEDDENEDDNDEA) shows a compositional bias: acidic residues. Residues 587-610 (VSEKSAETEKSAGADERDPDEKQL) are compositionally biased toward basic and acidic residues. Positions 759-884 (PSACSICSAV…PGMRGEAAAR (126 aa)) form a DNA-binding region, nuclear receptor. Disordered stretches follow at residues 915–937 (TSVK…PNPL), 981–1049 (LTKK…SHGV), 1115–1184 (VPSA…SSAK), and 1208–1231 (DIAT…KEHR). The span at 918 to 937 (KWKSSGDSTSALTSIKPNPL) shows a compositional bias: polar residues. Basic and acidic residues predominate over residues 986 to 1000 (SKQEKEKVKESEQSE). A compositionally biased stretch (low complexity) spans 1031 to 1041 (PQTSTTTQPSA). Residues 1123-1132 (SPEKPTHIVT) are compositionally biased toward basic and acidic residues. 2 stretches are compositionally biased toward low complexity: residues 1173–1183 (GTASAAGGSSA) and 1211–1223 (TSSS…NQTQ). 3 consecutive PHD-type zinc fingers follow at residues 1266–1347 (RALC…CTVC), 1348–1393 (YTCN…CLKC), and 1421–1482 (GNFC…CARR). The Bromo domain occupies 1496-1663 (AVMEEFKASL…SEQFPWFQNE (168 aa)). The segment at 1573 to 1592 (FKDQQQQQQQRNANMNKPRV) is disordered. A C2HC pre-PHD-type zinc finger spans residues 1734–1774 (TRMCLFCRKSGEGLSGEEARLLYCGHDCWVHTNCAMWSAEV). The segment at 1795 to 1842 (IKCTVCGNRGATVGCNVRSCGEHYHYPCARSIDCAFLTDKSMYCPAHA) adopts a PHD-type 4 zinc-finger fold. One can recognise an FYR N-terminal domain in the interval 1884 to 1941 (RVQFHIGSLEVRQLGAIVPRFSDSYEAVVPINFLCSRLYWSSKEPWKIVEYTVRTTIQ). Disordered regions lie at residues 1991-2019 (GGTD…PQQQ), 2068-2110 (TQAM…WPAS), 2283-2302 (CSPT…QGMT), 2649-2669 (GGGA…LGGT), 2866-2894 (SNLK…IASK), 3029-3096 (QHFS…PTPP), and 3347-3381 (RKEE…IQEP). A compositionally biased stretch (low complexity) spans 2074-2087 (NQAQNQNQQAGGAN). Low complexity predominate over residues 3032-3043 (STSSSSSSSNCS). Residues 3044–3057 (LPTNVVNPMQQQAP) show a composition bias toward polar residues. In terms of domain architecture, FYR C-terminal spans 3386–3470 (GPHLLYEIQS…EKCSKYTPKY (85 aa)). The 117-residue stretch at 3588–3704 (DYVGVFRSHI…QGEELTYDYK (117 aa)) folds into the SET domain. S-adenosyl-L-methionine contacts are provided by histidine 3598 and arginine 3600. An S-methylcysteine; by autocatalysis modification is found at cysteine 3641. S-adenosyl-L-methionine is bound by residues tyrosine 3642 and 3665–3666 (NH). The Zn(2+) site is built by cysteine 3668, cysteine 3714, cysteine 3716, and cysteine 3721. Residues 3710–3726 (EKIPCSCGSKRCRKYLN) form the Post-SET domain.

This sequence belongs to the class V-like SAM-binding methyltransferase superfamily. Histone-lysine methyltransferase family. TRX/MLL subfamily. As to quaternary structure, interacts (via SET domain) with ash1 (via SET domain). Interacts with Nup98. In terms of tissue distribution, maternal isoforms are expressed in syncytial blastoderm, confined to the ventral region fated to become mesoderm. An additional broad domain of expression arises during cellularization and is quickly resolved into four pair-rule-like stripes in the posterior half of the embryo.

It localises to the nucleus. The protein resides in the chromosome. The catalysed reaction is L-lysyl(9)-[histone H3] + 3 S-adenosyl-L-methionine = N(6),N(6),N(6)-trimethyl-L-lysyl(9)-[histone H3] + 3 S-adenosyl-L-homocysteine + 3 H(+). It carries out the reaction L-cysteinyl-[protein] + S-adenosyl-L-methionine = S-methyl-L-cysteinyl-[protein] + S-adenosyl-L-homocysteine + H(+). Functionally, histone methyltransferase that methylates 'Lys-4' of histone H3 (H3K4me). H3K4me represents a specific tag for epigenetic transcriptional activation. Functions in segment determination through interaction with genes of bithorax (BX-C) and antennapedia (ANT-C) complexes. Acts as an activator of BX-C. Involved in the very early regulation of homeotic genes expressed only in the posterior region of the embryo. Also has auto-methylation activity on Cys-3641. In Drosophila melanogaster (Fruit fly), this protein is Histone-lysine N-methyltransferase trithorax.